The sequence spans 460 residues: NADH-ubiquinone oxidoreductase chain 4 (460 aa).

The next 13 membrane-spanning stretches (helical) occupy residues Trp22–Leu42, Pro61–Ser81, Arg94–Ala113, Ile117–Asn139, Thr148–Leu168, Ile195–Leu217, Pro225–Met245, Met258–Leu278, Ser285–Ile304, Trp308–Leu330, Ile351–Pro371, Leu394–Met414, and Leu436–Trp456.

This sequence belongs to the complex I subunit 4 family.

The protein resides in the mitochondrion membrane. It carries out the reaction a ubiquinone + NADH + 5 H(+)(in) = a ubiquinol + NAD(+) + 4 H(+)(out). Its function is as follows. Core subunit of the mitochondrial membrane respiratory chain NADH dehydrogenase (Complex I) that is believed to belong to the minimal assembly required for catalysis. Complex I functions in the transfer of electrons from NADH to the respiratory chain. The immediate electron acceptor for the enzyme is believed to be ubiquinone. The protein is NADH-ubiquinone oxidoreductase chain 4 (MT-ND4) of Gadus morhua (Atlantic cod).